The sequence spans 256 residues: MSRKKTPKSKGASTPAASTLPTANGARPARSGTALSGPDAPPNGPLQPGRPSLGGGVDFYDVAFKVMLVGDSGVGKTCLLVRFKDGAFLAGTFISTVGIDFRNKVLDVDGVKVKLQMWDTAGQERFRSVTHAYYRDAHALLLLYDVTNKASFDNIQAWLTEIHEYAQHDVALMLLGNKVDSAHERVVKREDGEKLAKEYGLPFMETSAKTGLNVDLAFTAIAKELKQRSMKAPSEPRFRLHDYVKREGRGASCCRP.

Residues Met-1 to Pro-51 are disordered. The segment covering Ala-12–Ala-23 has biased composition (low complexity). The GTP site is built by Ser-72, Gly-73, Val-74, Gly-75, Lys-76, Thr-77, Cys-78, Ser-95, and Thr-96. Mg(2+) is bound at residue Thr-77. Short sequence motifs (switch) lie at residues Gly-86 to Phe-101 and Asp-119 to Asp-136. Residues Thr-96 and Asp-119 each coordinate Mg(2+). Gly-122, Asn-177, Lys-178, Asp-180, Ala-208, and Lys-209 together coordinate GTP. S-geranylgeranyl cysteine attachment occurs at residues Cys-253 and Cys-254.

This sequence belongs to the small GTPase superfamily. Rab family. Interacts with RIMS1. Interacts with ADRA2B. Mg(2+) serves as cofactor. As to expression, predominantly expressed in brain.

It is found in the golgi apparatus membrane. The protein resides in the cytoplasmic vesicle. It localises to the secretory vesicle membrane. It carries out the reaction GTP + H2O = GDP + phosphate + H(+). With respect to regulation, regulated by guanine nucleotide exchange factors (GEFs) which promote the exchange of bound GDP for free GTP. Regulated by GTPase activating proteins (GAPs) which increase the GTP hydrolysis activity. Inhibited by GDP dissociation inhibitors (GDIs). In terms of biological role, the small GTPases Rab are key regulators of intracellular membrane trafficking, from the formation of transport vesicles to their fusion with membranes. Rabs cycle between an inactive GDP-bound form and an active GTP-bound form that is able to recruit to membranes different set of downstream effectors directly responsible for vesicle formation, movement, tethering and fusion. RAB26 mediates transport of ADRA2A and ADRA2B from the Golgi to the cell membrane. Plays a role in the maturation of zymogenic granules and in pepsinogen secretion in the stomach. Plays a role in the secretion of amylase from acinar granules in the parotid gland. The sequence is that of Ras-related protein Rab-26 from Homo sapiens (Human).